Reading from the N-terminus, the 238-residue chain is Succinate dehydrogenase assembly factor 2, mitochondrial (238 aa).

The segment at 47 to 82 (GLKADGSRADQAEAGASQSLDKQSRTLDSVRDDTLS) is disordered. A compositionally biased stretch (basic and acidic residues) spans 68-80 (KQSRTLDSVRDDT).

This sequence belongs to the SDHAF2 family. Interacts with the flavoprotein subunit within the SDH catalytic dimer.

The protein resides in the mitochondrion matrix. Its function is as follows. Plays an essential role in the assembly of succinate dehydrogenase (SDH), an enzyme complex (also referred to as respiratory complex II) that is a component of both the tricarboxylic acid (TCA) cycle and the mitochondrial electron transport chain, and which couples the oxidation of succinate to fumarate with the reduction of ubiquinone (coenzyme Q) to ubiquinol. Required for flavinylation (covalent attachment of FAD) of the flavoprotein subunit of the SDH catalytic dimer. The polypeptide is Succinate dehydrogenase assembly factor 2, mitochondrial (Mycosarcoma maydis (Corn smut fungus)).